The sequence spans 266 residues: Very-long-chain aldehyde decarbonylase GL1-11 (266 aa).

The next 4 membrane-spanning stretches (helical) occupy residues 25–45 (VVTF…SLLF), 74–94 (ILYH…AFKF), 106–126 (WTVI…IFYW), and 163–183 (ILFL…HLFT). In terms of domain architecture, Fatty acid hydroxylase spans 113 to 248 (VLFYFVLEDF…FVYMDWLFGT (136 aa)).

It belongs to the sterol desaturase family. In terms of assembly, homodimer.

Its subcellular location is the endoplasmic reticulum membrane. It catalyses the reaction a long-chain fatty aldehyde + 2 NADPH + O2 + H(+) = a long-chain alkane + formate + 2 NADP(+) + H2O. Aldehyde decarbonylase involved in the conversion of aldehydes to alkanes. Core component of a very-long-chain alkane synthesis complex. In Oryza sativa subsp. indica (Rice), this protein is Very-long-chain aldehyde decarbonylase GL1-11.